A 119-amino-acid polypeptide reads, in one-letter code: Ribonuclease P protein component (119 aa).

The protein belongs to the RnpA family. In terms of assembly, consists of a catalytic RNA component (M1 or rnpB) and a protein subunit.

The enzyme catalyses Endonucleolytic cleavage of RNA, removing 5'-extranucleotides from tRNA precursor.. Functionally, RNaseP catalyzes the removal of the 5'-leader sequence from pre-tRNA to produce the mature 5'-terminus. It can also cleave other RNA substrates such as 4.5S RNA. The protein component plays an auxiliary but essential role in vivo by binding to the 5'-leader sequence and broadening the substrate specificity of the ribozyme. This chain is Ribonuclease P protein component, found in Syntrophomonas wolfei subsp. wolfei (strain DSM 2245B / Goettingen).